The chain runs to 592 residues: Protein US23 (592 aa).

Positions 407–491 (PRSLGDGEEE…NNVVPNVDRR (85 aa)) are disordered. Positions 460–481 (ADDEEQGEDDDDSGAEPMEPEE) are enriched in acidic residues.

It belongs to the herpesviridae US22 family.

The protein localises to the virion tegument. This Homo sapiens (Human) protein is Protein US23 (US23).